A 261-amino-acid polypeptide reads, in one-letter code: Kallikrein 1-related peptidase b5 (261 aa).

A signal peptide spans 1–18 (MWFLILFLALSLGGIDAA). The propeptide at 19–24 (PPVQSR) is activation peptide. In terms of domain architecture, Peptidase S1 spans 25–258 (IFGGFNCEKN…FNSWIKDTIA (234 aa)). Cystine bridges form between cysteine 31–cysteine 173, cysteine 50–cysteine 66, cysteine 152–cysteine 219, cysteine 184–cysteine 198, and cysteine 209–cysteine 234. Catalysis depends on histidine 65, which acts as the Charge relay system. Asparagine 102 carries an N-linked (GlcNAc...) asparagine glycan. Aspartate 120 (charge relay system) is an active-site residue. Serine 213 functions as the Charge relay system in the catalytic mechanism.

This sequence belongs to the peptidase S1 family. Kallikrein subfamily.

It carries out the reaction Preferential cleavage of Arg-|-Xaa bonds in small molecule substrates. Highly selective action to release kallidin (lysyl-bradykinin) from kininogen involves hydrolysis of Met-|-Xaa or Leu-|-Xaa.. In terms of biological role, glandular kallikreins cleave Met-Lys and Arg-Ser bonds in kininogen to release Lys-bradykinin. This Mus musculus (Mouse) protein is Kallikrein 1-related peptidase b5 (Klk1b5).